A 133-amino-acid polypeptide reads, in one-letter code: Transmembrane protein 60 (133 aa).

4 consecutive transmembrane segments (helical) span residues Leu-5–Leu-25, Trp-35–Val-55, Ala-78–Leu-98, and Phe-110–Phe-130.

The protein localises to the membrane. The polypeptide is Transmembrane protein 60 (Tmem60) (Mus musculus (Mouse)).